We begin with the raw amino-acid sequence, 393 residues long: NAD(P)H-quinone oxidoreductase subunit H, chloroplastic (393 aa).

This sequence belongs to the complex I 49 kDa subunit family. In terms of assembly, NDH is composed of at least 16 different subunits, 5 of which are encoded in the nucleus.

It is found in the plastid. It localises to the chloroplast thylakoid membrane. It catalyses the reaction a plastoquinone + NADH + (n+1) H(+)(in) = a plastoquinol + NAD(+) + n H(+)(out). The catalysed reaction is a plastoquinone + NADPH + (n+1) H(+)(in) = a plastoquinol + NADP(+) + n H(+)(out). In terms of biological role, NDH shuttles electrons from NAD(P)H:plastoquinone, via FMN and iron-sulfur (Fe-S) centers, to quinones in the photosynthetic chain and possibly in a chloroplast respiratory chain. The immediate electron acceptor for the enzyme in this species is believed to be plastoquinone. Couples the redox reaction to proton translocation, and thus conserves the redox energy in a proton gradient. This Crucihimalaya wallichii (Rock-cress) protein is NAD(P)H-quinone oxidoreductase subunit H, chloroplastic.